A 175-amino-acid polypeptide reads, in one-letter code: NADH-ubiquinone oxidoreductase chain 6 (175 aa).

5 helical membrane-spanning segments follow: residues 1–21 (MMYM…GFSS), 26–46 (IYGG…VMGL), 47–67 (GGSF…LVVF), 87–107 (VILS…VWMI), and 152–172 (WLVI…IEIT).

It belongs to the complex I subunit 6 family.

The protein localises to the mitochondrion membrane. It catalyses the reaction a ubiquinone + NADH + 5 H(+)(in) = a ubiquinol + NAD(+) + 4 H(+)(out). Its function is as follows. Core subunit of the mitochondrial membrane respiratory chain NADH dehydrogenase (Complex I) that is believed to belong to the minimal assembly required for catalysis. Complex I functions in the transfer of electrons from NADH to the respiratory chain. The immediate electron acceptor for the enzyme is believed to be ubiquinone. The protein is NADH-ubiquinone oxidoreductase chain 6 (MT-ND6) of Dasypus novemcinctus (Nine-banded armadillo).